Reading from the N-terminus, the 199-residue chain is Pyridoxal 5'-phosphate synthase subunit PdxT (199 aa).

47–49 provides a ligand contact to L-glutamine; it reads GES. Residue Cys-79 is the Nucleophile of the active site. Residues Arg-106 and 133–134 each bind L-glutamine; that span reads IR. Active-site charge relay system residues include His-169 and Glu-171.

The protein belongs to the glutaminase PdxT/SNO family. As to quaternary structure, in the presence of PdxS, forms a dodecamer of heterodimers. Only shows activity in the heterodimer.

The enzyme catalyses aldehydo-D-ribose 5-phosphate + D-glyceraldehyde 3-phosphate + L-glutamine = pyridoxal 5'-phosphate + L-glutamate + phosphate + 3 H2O + H(+). It catalyses the reaction L-glutamine + H2O = L-glutamate + NH4(+). It functions in the pathway cofactor biosynthesis; pyridoxal 5'-phosphate biosynthesis. Functionally, catalyzes the hydrolysis of glutamine to glutamate and ammonia as part of the biosynthesis of pyridoxal 5'-phosphate. The resulting ammonia molecule is channeled to the active site of PdxS. The sequence is that of Pyridoxal 5'-phosphate synthase subunit PdxT from Desulfitobacterium hafniense (strain DSM 10664 / DCB-2).